The primary structure comprises 417 residues: CinA-like protein (417 aa).

This sequence belongs to the CinA family.

The sequence is that of CinA-like protein from Leptospira biflexa serovar Patoc (strain Patoc 1 / Ames).